Reading from the N-terminus, the 52-residue chain is Keratin-associated protein 19-2 (52 aa).

Belongs to the KRTAP type 19 family. In terms of assembly, interacts with hair keratins.

In terms of biological role, in the hair cortex, hair keratin intermediate filaments are embedded in an interfilamentous matrix, consisting of hair keratin-associated proteins (KRTAP), which are essential for the formation of a rigid and resistant hair shaft through their extensive disulfide bond cross-linking with abundant cysteine residues of hair keratins. The matrix proteins include the high-sulfur and high-glycine-tyrosine keratins. The sequence is that of Keratin-associated protein 19-2 (KRTAP19-2) from Homo sapiens (Human).